A 487-amino-acid chain; its full sequence is 1-hydroxycarotenoid 3,4-desaturase (487 aa).

FAD is bound by residues Gly12, Glu31, Lys39, 55-56 (SL), Val247, Asn275, Leu431, Gly461, and 468-469 (GI).

The protein belongs to the carotenoid/retinoid oxidoreductase family. In terms of assembly, monomer.

The catalysed reaction is rhodopin + A = (3E)-3,4-didehydrorhodopin + AH2. It catalyses the reaction 1'-hydroxy-gamma-carotene + A = 1'-hydroxytorulene + AH2. The enzyme catalyses 1-hydroxy-all-trans-1,2-dihydro-neurosporene + A = demethylspheroidene + AH2. It carries out the reaction 1,1'-dihydroxy-1,1',2,2'-tetrahydroneurosporene + A = 1'-hydroxy-demethylspheroidene + AH2. The catalysed reaction is 1,1'-dihydroxy-1,1',2,2'-tetrahydrolycopene + A = 1,1'-dihydroxy-3,4-didehydro-1,2-dihydrolycopene + AH2. It participates in carotenoid biosynthesis. Its function is as follows. Catalyzes the introduction of a C-3,4 double bond into 1'-hydroxy-gamma-carotene and rhodopin (1-hydroxylycopene) to yield 1'-hydroxytorulene and (3E)-3,4-didehydrorhodopin, respectively. Can also use 1-hydroxy-all-trans-1,2-dihydro-neurosporene, 1,1'-dihydroxy-1,1',2,2'-tetrahydroneurosporene and 1,1'-dihydroxy-1,1',2,2'-tetrahydrolycopene. Probably involved in the synthesis of myxol, a gamma-carotene derivative. May use FAD as a proton acceptor. This is 1-hydroxycarotenoid 3,4-desaturase from Nonlabens dokdonensis (strain DSM 17205 / KCTC 12402 / DSW-6) (Donghaeana dokdonensis).